The primary structure comprises 185 residues: Crossover junction endodeoxyribonuclease RuvC (185 aa).

Catalysis depends on residues Asp-7, Glu-68, and Asp-141. Positions 7, 68, and 141 each coordinate Mg(2+).

This sequence belongs to the RuvC family. In terms of assembly, homodimer which binds Holliday junction (HJ) DNA. The HJ becomes 2-fold symmetrical on binding to RuvC with unstacked arms; it has a different conformation from HJ DNA in complex with RuvA. In the full resolvosome a probable DNA-RuvA(4)-RuvB(12)-RuvC(2) complex forms which resolves the HJ. The cofactor is Mg(2+).

The protein resides in the cytoplasm. The enzyme catalyses Endonucleolytic cleavage at a junction such as a reciprocal single-stranded crossover between two homologous DNA duplexes (Holliday junction).. In terms of biological role, the RuvA-RuvB-RuvC complex processes Holliday junction (HJ) DNA during genetic recombination and DNA repair. Endonuclease that resolves HJ intermediates. Cleaves cruciform DNA by making single-stranded nicks across the HJ at symmetrical positions within the homologous arms, yielding a 5'-phosphate and a 3'-hydroxyl group; requires a central core of homology in the junction. The consensus cleavage sequence is 5'-(A/T)TT(C/G)-3'. Cleavage occurs on the 3'-side of the TT dinucleotide at the point of strand exchange. HJ branch migration catalyzed by RuvA-RuvB allows RuvC to scan DNA until it finds its consensus sequence, where it cleaves and resolves the cruciform DNA. The sequence is that of Crossover junction endodeoxyribonuclease RuvC from Mycolicibacterium smegmatis (strain ATCC 700084 / mc(2)155) (Mycobacterium smegmatis).